A 276-amino-acid polypeptide reads, in one-letter code: Dermonecrotic toxin LlSicTox-alphaIV2iv (276 aa).

Residue histidine 5 is part of the active site. Glutamate 25 and aspartate 27 together coordinate Mg(2+). Residue histidine 41 is the Nucleophile of the active site. Intrachain disulfides connect cysteine 45–cysteine 51 and cysteine 47–cysteine 193. Aspartate 85 contributes to the Mg(2+) binding site.

It belongs to the arthropod phospholipase D family. Class II subfamily. It depends on Mg(2+) as a cofactor. As to expression, expressed by the venom gland.

The protein resides in the secreted. It catalyses the reaction an N-(acyl)-sphingosylphosphocholine = an N-(acyl)-sphingosyl-1,3-cyclic phosphate + choline. It carries out the reaction an N-(acyl)-sphingosylphosphoethanolamine = an N-(acyl)-sphingosyl-1,3-cyclic phosphate + ethanolamine. The catalysed reaction is a 1-acyl-sn-glycero-3-phosphocholine = a 1-acyl-sn-glycero-2,3-cyclic phosphate + choline. The enzyme catalyses a 1-acyl-sn-glycero-3-phosphoethanolamine = a 1-acyl-sn-glycero-2,3-cyclic phosphate + ethanolamine. Its function is as follows. Dermonecrotic toxins cleave the phosphodiester linkage between the phosphate and headgroup of certain phospholipids (sphingolipid and lysolipid substrates), forming an alcohol (often choline) and a cyclic phosphate. This toxin acts on sphingomyelin (SM). It may also act on ceramide phosphoethanolamine (CPE), lysophosphatidylcholine (LPC) and lysophosphatidylethanolamine (LPE), but not on lysophosphatidylserine (LPS), and lysophosphatidylglycerol (LPG). It acts by transphosphatidylation, releasing exclusively cyclic phosphate products as second products. Induces dermonecrosis, hemolysis, increased vascular permeability, edema, inflammatory response, and platelet aggregation. This chain is Dermonecrotic toxin LlSicTox-alphaIV2iv, found in Loxosceles laeta (South American recluse spider).